The chain runs to 178 residues: Ribosome maturation factor RimM (178 aa).

Residues Ala-101–Phe-178 enclose the PRC barrel domain.

This sequence belongs to the RimM family. As to quaternary structure, binds ribosomal protein uS19.

It localises to the cytoplasm. Functionally, an accessory protein needed during the final step in the assembly of 30S ribosomal subunit, possibly for assembly of the head region. Essential for efficient processing of 16S rRNA. May be needed both before and after RbfA during the maturation of 16S rRNA. It has affinity for free ribosomal 30S subunits but not for 70S ribosomes. This chain is Ribosome maturation factor RimM, found in Pseudomonas putida (strain ATCC 700007 / DSM 6899 / JCM 31910 / BCRC 17059 / LMG 24140 / F1).